The chain runs to 475 residues: MTTAPTSPALPASSDTAPTGPAPRGLHVITWGCQMNVYDSARMADVLRPLGYGPVERPEDADMVILNTCHIRERATEKVFSELGRLRKIRDERMSNGADRTIIAVAGCVAQAEGEVILTRAPYVDLVLGPQTYHKLPEMVARAARAGGAVIETDFPVEQKFDFLPTDAAPQTQGNLTAFLTIQEGCDKFCSFCVVPYTRGAETSRPVASVLAEARRMAESGVREITLLGQNVNAYHGDDGKGGSETLAGLVEQLAQIPGLGRIRYMTSHPRDVDQSLIDAHRDNPALMPFLHLPVQSGSDRILKAMNRGHTADEYRESVRKLREARPDLALSSDFIVGHPGETEEDFEATMQLVRDIGFAMAYSFKYSPRPGTPAAGQPMQVPEDVKDRRLAELQALLREQQDAFNADMVGTVQEILVTNRGRKPGQIAGRSPYLQPVHFDGPDHLIGSTVKVAITTRRTNSLGGTLIRETASAC.

Residues 1–21 form a disordered region; sequence MTTAPTSPALPASSDTAPTGP. Residues 24–145 enclose the MTTase N-terminal domain; it reads RGLHVITWGC…LPEMVARAAR (122 aa). Positions 33, 69, 108, 186, 190, and 193 each coordinate [4Fe-4S] cluster. In terms of domain architecture, Radical SAM core spans 172 to 404; that stretch reads TQGNLTAFLT…QALLREQQDA (233 aa). Residues 407–469 enclose the TRAM domain; the sequence is ADMVGTVQEI…TNSLGGTLIR (63 aa).

Belongs to the methylthiotransferase family. MiaB subfamily. In terms of assembly, monomer. The cofactor is [4Fe-4S] cluster.

It localises to the cytoplasm. It carries out the reaction N(6)-dimethylallyladenosine(37) in tRNA + (sulfur carrier)-SH + AH2 + 2 S-adenosyl-L-methionine = 2-methylsulfanyl-N(6)-dimethylallyladenosine(37) in tRNA + (sulfur carrier)-H + 5'-deoxyadenosine + L-methionine + A + S-adenosyl-L-homocysteine + 2 H(+). Functionally, catalyzes the methylthiolation of N6-(dimethylallyl)adenosine (i(6)A), leading to the formation of 2-methylthio-N6-(dimethylallyl)adenosine (ms(2)i(6)A) at position 37 in tRNAs that read codons beginning with uridine. In Gluconobacter oxydans (strain 621H) (Gluconobacter suboxydans), this protein is tRNA-2-methylthio-N(6)-dimethylallyladenosine synthase.